The primary structure comprises 263 residues: Hydroxyethylthiazole kinase 1 (263 aa).

Residue Met-42 coordinates substrate. Lys-118 and Thr-164 together coordinate ATP. Residue Gly-191 coordinates substrate.

This sequence belongs to the Thz kinase family. Requires Mg(2+) as cofactor.

It catalyses the reaction 5-(2-hydroxyethyl)-4-methylthiazole + ATP = 4-methyl-5-(2-phosphooxyethyl)-thiazole + ADP + H(+). The protein operates within cofactor biosynthesis; thiamine diphosphate biosynthesis; 4-methyl-5-(2-phosphoethyl)-thiazole from 5-(2-hydroxyethyl)-4-methylthiazole: step 1/1. In terms of biological role, catalyzes the phosphorylation of the hydroxyl group of 4-methyl-5-beta-hydroxyethylthiazole (THZ). In Clostridium botulinum (strain Kyoto / Type A2), this protein is Hydroxyethylthiazole kinase 1.